The chain runs to 606 residues: NADH-ubiquinone oxidoreductase chain 5 (606 aa).

A run of 16 helical transmembrane segments spans residues 3 to 23 (LFTS…LMSL), 35 to 55 (YVKT…LIFI), 87 to 107 (MIFT…SMWY), 117 to 137 (FFKY…ANNL), 140 to 160 (LFIG…WWYG), 171 to 191 (AILY…WFLF), 211 to 233 (LPLL…HPWL), 241 to 261 (TPVS…FLLI), 273 to 293 (MQTL…ICAL), 301 to 320 (IIAF…IGIN), 325 to 347 (AFLH…GSII), 366 to 386 (LPFT…TPFL), 402 to 422 (SYTN…TAVY), 457 to 477 (LLIG…PMTI), 488 to 508 (LTAL…SLMT), and 582 to 602 (GLIK…MLLF).

This sequence belongs to the complex I subunit 5 family. As to quaternary structure, core subunit of respiratory chain NADH dehydrogenase (Complex I) which is composed of 45 different subunits.

Its subcellular location is the mitochondrion inner membrane. The catalysed reaction is a ubiquinone + NADH + 5 H(+)(in) = a ubiquinol + NAD(+) + 4 H(+)(out). Functionally, core subunit of the mitochondrial membrane respiratory chain NADH dehydrogenase (Complex I) which catalyzes electron transfer from NADH through the respiratory chain, using ubiquinone as an electron acceptor. Essential for the catalytic activity and assembly of complex I. In Pseudosoriculus fumidus (Taiwanese brown-toothed shrew), this protein is NADH-ubiquinone oxidoreductase chain 5 (MT-ND5).